An 884-amino-acid chain; its full sequence is Lon protease homolog 2, peroxisomal (884 aa).

The region spanning 12-255 (LAILPFRNKV…KATELVDRHL (244 aa)) is the Lon N-terminal domain. Residues 67–101 (SLLSPGVGSDSGEGGSKAPGGSAGESTKQDTKNGK) form a disordered region. Residues 75 to 89 (SDSGEGGSKAPGGSA) are compositionally biased toward gly residues. Residue 408 to 415 (GPPGVGKT) participates in ATP binding. Positions 689-874 (VASPGVSVGL…EEVLDHAFEG (186 aa)) constitute a Lon proteolytic domain. Active-site residues include Ser780 and Lys823. The Microbody targeting signal signature appears at 882 to 884 (SKL).

Belongs to the peptidase S16 family. In terms of tissue distribution, expressed in roots, leaves and panicles.

It localises to the peroxisome matrix. The catalysed reaction is Hydrolysis of proteins in presence of ATP.. Its function is as follows. ATP-dependent serine protease that mediates the selective degradation of misfolded and unassembled polypeptides in the peroxisomal matrix. Necessary for type 2 peroxisome targeting signal (PTS2)-containing protein processing and facilitates peroxisome matrix protein import. In Oryza sativa subsp. indica (Rice), this protein is Lon protease homolog 2, peroxisomal (LON1).